The following is a 2310-amino-acid chain: Peroxide stress-activated histidine kinase mak2 (2310 aa).

The 281-residue stretch at 12–292 (DYAISQLGEF…SATDLCYTIV (281 aa)) folds into the Protein kinase domain. The GAF domain occupies 1450–1592 (RLGPLLTTVI…LLSQQIAISV (143 aa)). The Histidine kinase domain occupies 1760 to 1986 (NMSHELRTPF…TFWFHVQLRN (227 aa)). H1763 is subject to Phosphohistidine; by autocatalysis. In terms of domain architecture, Response regulatory spans 2180–2303 (YALIAEDNLI…QLVNAVREFV (124 aa)). Position 2232 is a 4-aspartylphosphate (D2232).

It is found in the cytoplasm. It catalyses the reaction ATP + protein L-histidine = ADP + protein N-phospho-L-histidine.. In terms of biological role, involved in the control of the SAPK-dependent transcriptional response to peroxide stress. Regulates sty1 activity. In Schizosaccharomyces pombe (strain 972 / ATCC 24843) (Fission yeast), this protein is Peroxide stress-activated histidine kinase mak2 (mak2).